The sequence spans 96 residues: Aspartyl/glutamyl-tRNA(Asn/Gln) amidotransferase subunit C (96 aa).

The protein belongs to the GatC family. Heterotrimer of A, B and C subunits.

It carries out the reaction L-glutamyl-tRNA(Gln) + L-glutamine + ATP + H2O = L-glutaminyl-tRNA(Gln) + L-glutamate + ADP + phosphate + H(+). The enzyme catalyses L-aspartyl-tRNA(Asn) + L-glutamine + ATP + H2O = L-asparaginyl-tRNA(Asn) + L-glutamate + ADP + phosphate + 2 H(+). In terms of biological role, allows the formation of correctly charged Asn-tRNA(Asn) or Gln-tRNA(Gln) through the transamidation of misacylated Asp-tRNA(Asn) or Glu-tRNA(Gln) in organisms which lack either or both of asparaginyl-tRNA or glutaminyl-tRNA synthetases. The reaction takes place in the presence of glutamine and ATP through an activated phospho-Asp-tRNA(Asn) or phospho-Glu-tRNA(Gln). The polypeptide is Aspartyl/glutamyl-tRNA(Asn/Gln) amidotransferase subunit C (Herpetosiphon aurantiacus (strain ATCC 23779 / DSM 785 / 114-95)).